The chain runs to 879 residues: MLLRLLLLLAPCGAGFATEVVSISLRGNWKIHNGNGSLQLPAAVPGCVHSALFNKRIIKDPYYRFNNLDYRWIALDNWTYIKKFKLHSDMSEWNKVNLVFEGIDTVAVVLLNSVPIGKTDNMFRRYSFDITHMVKAVNIIEVRFQSPVIYANQRSERHTAYWVPPNCPPPVQDGECHVNFIRKMQCSFGWDWGPSFPTQGIWKDVRIEAYNICHLNYFMFTPIYDNYMETWNLKIESSFDVVSSKLVSGEAIVAIPELNIQQRNNIELRHGERTVKLFVKIDKAVIVETWWPHGHGNQTGYDMTVTFELDGGLRFEKSAKVYFRTVELVEEPIQNSPGLTFYFKINGLPIFLKGSNWIPADSFQDRVTSDMLRLLLQSVVDANMNALRVWGGGIYEQDEFYELCDELGIMIWQDFMFACALYPTDEDFMDSVREEVTHQVRRLKSHPSIITWSGNNENEAALMMGWYDTKPGYLHTYIKDYVTLYVKNIRTIVLEGDQTRPFIISSPTNGAKTTAEGWLSPNPYDLNYGDVHFYDYMSDCWNWRTFPKARFVSEYGYQSWPSFSTLEKVSSEEDWSYESSFALHRQHLINGNSEMLQQIELHFKLPNSADQLRRFKDTLYLTQVMQAQCVKTETEFYRRSRNEIVDGKGHTMGALYWQLNDIWQAPSWSSLEYGGKWKMLHYFARRFFAPLLPVGFEDKDVLFIYGVSDLPSDHQMMLTVRVHTWSSLELVCSELTNPFVMKAGESVVLYSKPVPELLKGCPGCTRQSCVVSFYLSTDGELLSPINYHFLSSLKNAKGLHKANITATISQQGNTFVFDLKTSAVAPFVWLDVGSIPGRFSDNGFLMTEKTRTVFFYPWKPTSKSELEQSFHVTSLADTY.

Positions 1–17 (MLLRLLLLLAPCGAGFA) are cleaved as a signal peptide. N-linked (GlcNAc...) asparagine glycans are attached at residues asparagine 35 and asparagine 77. Cysteines 167 and 176 form a disulfide. 190–192 (WDW) lines the substrate pocket. Asparagine 297 carries an N-linked (GlcNAc...) asparagine glycan. Asparagine 456 lines the substrate pocket. Glutamate 457 acts as the Proton donor in catalysis. 3 disulfides stabilise this stretch: cysteine 540–cysteine 629, cysteine 732–cysteine 761, and cysteine 764–cysteine 769. Glutamate 554 serves as the catalytic Nucleophile. A glycan (N-linked (GlcNAc...) asparagine) is linked at asparagine 803.

Belongs to the glycosyl hydrolase 2 family. In terms of assembly, monomer. Post-translationally, N-glycosylated. As to expression, detected in kidney (at protein level). Found in spleen and to a lesser extent in liver. Not detected in kidney or brain.

The protein localises to the lysosome. The catalysed reaction is Hydrolysis of terminal, non-reducing beta-D-mannose residues in beta-D-mannosides.. It participates in glycan metabolism; N-glycan degradation. Exoglycosidase that cleaves the single beta-linked mannose residue from the non-reducing end of all N-linked glycoprotein oligosaccharides. In Capra hircus (Goat), this protein is Beta-mannosidase (MANBA).